A 165-amino-acid chain; its full sequence is Protein SEED AND ROOT HAIR PROTECTIVE PROTEIN (165 aa).

The first 24 residues, Met1–Ala24, serve as a signal peptide directing secretion.

This sequence belongs to the plant proline-rich protein superfamily. In terms of tissue distribution, root hair and seed specific expression. Also observed in other tissues including siliques, roots and flowers.

Its subcellular location is the secreted. It localises to the cell wall. Functionally, contributes to cell wall structure in root hairs and seeds, especially in phosphate (Pi) deprivation conditions or in the presence of ethylene. Particularly important in maternal tissues (pericarps and seed coats) during seed development, especially under stress conditions. Confers thermotolerance in seed germination rate. The chain is Protein SEED AND ROOT HAIR PROTECTIVE PROTEIN from Arabidopsis thaliana (Mouse-ear cress).